Here is a 116-residue protein sequence, read N- to C-terminus: Large ribosomal subunit protein bL19 (116 aa).

This sequence belongs to the bacterial ribosomal protein bL19 family.

Functionally, this protein is located at the 30S-50S ribosomal subunit interface and may play a role in the structure and function of the aminoacyl-tRNA binding site. This is Large ribosomal subunit protein bL19 from Staphylococcus carnosus (strain TM300).